A 394-amino-acid polypeptide reads, in one-letter code: Elongation factor Tu (394 aa).

The tr-type G domain occupies 10 to 204; sequence KLHINVGTIG…VLDSYIPEPK (195 aa). The tract at residues 19–26 is G1; it reads GHVDHGKT. GTP is bound at residue 19–26; the sequence is GHVDHGKT. Mg(2+) is bound at residue Thr26. Residues 60–64 form a G2 region; that stretch reads GITIN. The segment at 81 to 84 is G3; that stretch reads DCPG. Residues 81–85 and 136–139 each bind GTP; these read DCPGH and NKCD. A G4 region spans residues 136 to 139; sequence NKCD. The segment at 174 to 176 is G5; sequence SAL.

It belongs to the TRAFAC class translation factor GTPase superfamily. Classic translation factor GTPase family. EF-Tu/EF-1A subfamily. In terms of assembly, monomer.

It is found in the cytoplasm. It catalyses the reaction GTP + H2O = GDP + phosphate + H(+). Functionally, GTP hydrolase that promotes the GTP-dependent binding of aminoacyl-tRNA to the A-site of ribosomes during protein biosynthesis. This Baumannia cicadellinicola subsp. Homalodisca coagulata protein is Elongation factor Tu.